The sequence spans 343 residues: Dihydroorotase (343 aa).

The Zn(2+) site is built by His-13 and His-15. Residues 15 to 17 (HLR) and Asn-41 contribute to the substrate site. Lys-99, His-136, and His-174 together coordinate Zn(2+). An N6-carboxylysine modification is found at Lys-99. His-136 contributes to the substrate binding site. Leu-219 contributes to the substrate binding site. Asp-247 contributes to the Zn(2+) binding site. Asp-247 is an active-site residue. The substrate site is built by His-251 and Ala-263.

This sequence belongs to the metallo-dependent hydrolases superfamily. DHOase family. Class II DHOase subfamily. In terms of assembly, homodimer. Zn(2+) is required as a cofactor.

The enzyme catalyses (S)-dihydroorotate + H2O = N-carbamoyl-L-aspartate + H(+). Its pathway is pyrimidine metabolism; UMP biosynthesis via de novo pathway; (S)-dihydroorotate from bicarbonate: step 3/3. Catalyzes the reversible cyclization of carbamoyl aspartate to dihydroorotate. The protein is Dihydroorotase of Shewanella baltica (strain OS155 / ATCC BAA-1091).